Reading from the N-terminus, the 552-residue chain is DNA ligase (552 aa).

Glutamate 229 contributes to the ATP binding site. The N6-AMP-lysine intermediate role is filled by lysine 231. The ATP site is built by arginine 236 and glutamate 283. Mg(2+) contacts are provided by glutamate 283 and glutamate 377. Positions 382 and 397 each coordinate ATP.

Belongs to the ATP-dependent DNA ligase family. In terms of assembly, interacts with host TOP2A and TOP2B. Mg(2+) serves as cofactor.

Its subcellular location is the host cytoplasm. It carries out the reaction ATP + (deoxyribonucleotide)n-3'-hydroxyl + 5'-phospho-(deoxyribonucleotide)m = (deoxyribonucleotide)n+m + AMP + diphosphate.. Its function is as follows. DNA ligase that seals nicks in double-stranded DNA during DNA replication, DNA recombination and DNA repair. Recruits cellular topoisomerase II to sites of viral replication and assembly. Contributes to the repair of the viral genome following UV irradiation. This Vaccinia virus (strain Western Reserve) (VACV) protein is DNA ligase (OPG180).